The primary structure comprises 246 residues: Virulence plasmid protein pGP6-D (246 aa).

It belongs to the UPF0137 (pGP6-D) family.

The sequence is that of Virulence plasmid protein pGP6-D from Chlamydia muridarum (strain MoPn / Nigg).